A 191-amino-acid polypeptide reads, in one-letter code: Small ribosomal subunit protein eS7 (191 aa).

This sequence belongs to the eukaryotic ribosomal protein eS7 family.

This chain is Small ribosomal subunit protein eS7 (RPS7), found in Hordeum vulgare (Barley).